We begin with the raw amino-acid sequence, 498 residues long: 3-octaprenyl-4-hydroxybenzoate carboxy-lyase (498 aa).

Position 175 (Asn-175) interacts with Mn(2+). Residues 178-180, 192-194, and 197-198 each bind prenylated FMN; these read IYR, RWL, and RG. Residue Glu-241 coordinates Mn(2+). Asp-290 (proton donor) is an active-site residue.

The protein belongs to the UbiD family. Homohexamer. Prenylated FMN serves as cofactor. Requires Mn(2+) as cofactor.

The protein localises to the cell membrane. It carries out the reaction a 4-hydroxy-3-(all-trans-polyprenyl)benzoate + H(+) = a 2-(all-trans-polyprenyl)phenol + CO2. It functions in the pathway cofactor biosynthesis; ubiquinone biosynthesis. In terms of biological role, catalyzes the decarboxylation of 3-octaprenyl-4-hydroxy benzoate to 2-octaprenylphenol, an intermediate step in ubiquinone biosynthesis. The chain is 3-octaprenyl-4-hydroxybenzoate carboxy-lyase from Pectobacterium atrosepticum (strain SCRI 1043 / ATCC BAA-672) (Erwinia carotovora subsp. atroseptica).